Reading from the N-terminus, the 238-residue chain is MRPSGRTAQQVRPITITRHFTAHAEGSVLVEFGNTKVICTASVEENVPRWLKGKGKGWVTAEYGMLPRATHTRNNREAASGKQGGRTMEIQRLIARSLRAAVDLEALGEQMITVDCDVIQADGGTRTASITGASVALADAINHMIASGKLKKNPMKGHVAAVSVGIYKGEAICDLEYLEDSAADTDMNVVMMEDGKMIEVQGTAEVAPFSHQELLDMLALAQQGINDIIEKQKAALAE.

Residues arginine 86 and 124–126 contribute to the phosphate site; that span reads GTR.

Belongs to the RNase PH family. Homohexameric ring arranged as a trimer of dimers.

It catalyses the reaction tRNA(n+1) + phosphate = tRNA(n) + a ribonucleoside 5'-diphosphate. In terms of biological role, phosphorolytic 3'-5' exoribonuclease that plays an important role in tRNA 3'-end maturation. Removes nucleotide residues following the 3'-CCA terminus of tRNAs; can also add nucleotides to the ends of RNA molecules by using nucleoside diphosphates as substrates, but this may not be physiologically important. Probably plays a role in initiation of 16S rRNA degradation (leading to ribosome degradation) during starvation. The polypeptide is Ribonuclease PH (Aliivibrio salmonicida (strain LFI1238) (Vibrio salmonicida (strain LFI1238))).